We begin with the raw amino-acid sequence, 343 residues long: Beta-ketoacyl-[acyl-carrier-protein] synthase III 1 (343 aa).

Active-site residues include C122 and H268. The interval 269–273 is ACP-binding; it reads QANVR. The active site involves N299.

Belongs to the thiolase-like superfamily. FabH family. In terms of assembly, homodimer.

The protein localises to the cytoplasm. The enzyme catalyses malonyl-[ACP] + acetyl-CoA + H(+) = 3-oxobutanoyl-[ACP] + CO2 + CoA. It functions in the pathway lipid metabolism; fatty acid biosynthesis. Its function is as follows. Essential enzyme that catalyzes the condensation reaction of fatty acid synthesis by the addition to an acyl acceptor of two carbons from malonyl-ACP. Catalyzes the first condensation reaction which initiates fatty acid synthesis and may therefore play a role in governing the total rate of fatty acid production. Possesses both acetoacetyl-ACP synthase and acetyl transacylase activities. Its substrate specificity determines the biosynthesis of branched-chain of fatty acids. The sequence is that of Beta-ketoacyl-[acyl-carrier-protein] synthase III 1 from Streptomyces coelicolor (strain ATCC BAA-471 / A3(2) / M145).